Consider the following 1018-residue polypeptide: Cytadherence high molecular weight protein 1 (1018 aa).

Coiled-coil stretches lie at residues 782-815 and 849-880; these read NRFLLIKKELQAELTRLIEENEQLKAEFLNAKDL and ELVRNIQKAILENESKIKNIQITLKELKAVYK.

Post-translationally, phosphorylated mainly on serine residues.

The protein resides in the cell projection. Its subcellular location is the attachment organelle membrane. Component of the cytoskeleton-like structure which stabilizes the shape of the wall-less Mycoplasma. This cytoskeleton-like network of accessory proteins containing HMW proteins 1 to 5 allows the proper anchoring of cytadhesin proteins in the mycoplasmal membrane at the attachment organelle. The sequence is that of Cytadherence high molecular weight protein 1 (hmw1) from Mycoplasma pneumoniae (strain ATCC 29342 / M129 / Subtype 1) (Mycoplasmoides pneumoniae).